The sequence spans 480 residues: Protein nucleotidyltransferase YdiU (480 aa).

ATP-binding residues include Gly-86, Gly-88, Arg-89, Lys-109, Asp-121, Gly-122, Arg-172, and Arg-179. Catalysis depends on Asp-248, which acts as the Proton acceptor. Residues Asn-249 and Asp-258 each contribute to the Mg(2+) site. Asp-258 lines the ATP pocket.

The protein belongs to the SELO family. Mg(2+) is required as a cofactor. It depends on Mn(2+) as a cofactor.

It catalyses the reaction L-seryl-[protein] + ATP = 3-O-(5'-adenylyl)-L-seryl-[protein] + diphosphate. The catalysed reaction is L-threonyl-[protein] + ATP = 3-O-(5'-adenylyl)-L-threonyl-[protein] + diphosphate. It carries out the reaction L-tyrosyl-[protein] + ATP = O-(5'-adenylyl)-L-tyrosyl-[protein] + diphosphate. The enzyme catalyses L-histidyl-[protein] + UTP = N(tele)-(5'-uridylyl)-L-histidyl-[protein] + diphosphate. It catalyses the reaction L-seryl-[protein] + UTP = O-(5'-uridylyl)-L-seryl-[protein] + diphosphate. The catalysed reaction is L-tyrosyl-[protein] + UTP = O-(5'-uridylyl)-L-tyrosyl-[protein] + diphosphate. Its function is as follows. Nucleotidyltransferase involved in the post-translational modification of proteins. It can catalyze the addition of adenosine monophosphate (AMP) or uridine monophosphate (UMP) to a protein, resulting in modifications known as AMPylation and UMPylation. This Salmonella schwarzengrund (strain CVM19633) protein is Protein nucleotidyltransferase YdiU.